Consider the following 740-residue polypeptide: Polyribonucleotide nucleotidyltransferase (740 aa).

Mg(2+) contacts are provided by aspartate 514 and aspartate 520. In terms of domain architecture, KH spans 580–639 (PRIITVKIPVDKIGEVIGPKRQMINQIQEDTGAEITIEDDGTIYIGAADGPAAEAARATI). In terms of domain architecture, S1 motif spans 651–723 (GERILGSVVK…SRGKLSLIPV (73 aa)).

The protein belongs to the polyribonucleotide nucleotidyltransferase family. In terms of assembly, homotrimer. Requires Mg(2+) as cofactor.

Its subcellular location is the cytoplasm. It carries out the reaction RNA(n+1) + phosphate = RNA(n) + a ribonucleoside 5'-diphosphate. In terms of biological role, involved in mRNA degradation. Catalyzes the phosphorolysis of single-stranded polyribonucleotides processively in the 3'- to 5'-direction. The polypeptide is Polyribonucleotide nucleotidyltransferase (Streptomyces antibioticus).